Here is a 181-residue protein sequence, read N- to C-terminus: Adenine phosphoribosyltransferase (181 aa).

Belongs to the purine/pyrimidine phosphoribosyltransferase family. Homodimer.

Its subcellular location is the cytoplasm. It carries out the reaction AMP + diphosphate = 5-phospho-alpha-D-ribose 1-diphosphate + adenine. Its pathway is purine metabolism; AMP biosynthesis via salvage pathway; AMP from adenine: step 1/1. Its function is as follows. Catalyzes a salvage reaction resulting in the formation of AMP, that is energically less costly than de novo synthesis. This Methylobacterium sp. (strain 4-46) protein is Adenine phosphoribosyltransferase.